A 200-amino-acid chain; its full sequence is Large ribosomal subunit protein uL4 (200 aa).

The segment at 38–67 (GRQGSKAQKTRSEVSGGGKKPWRQKGTGRA) is disordered.

It belongs to the universal ribosomal protein uL4 family. As to quaternary structure, part of the 50S ribosomal subunit.

Its function is as follows. One of the primary rRNA binding proteins, this protein initially binds near the 5'-end of the 23S rRNA. It is important during the early stages of 50S assembly. It makes multiple contacts with different domains of the 23S rRNA in the assembled 50S subunit and ribosome. In terms of biological role, forms part of the polypeptide exit tunnel. This Pseudomonas paraeruginosa (strain DSM 24068 / PA7) (Pseudomonas aeruginosa (strain PA7)) protein is Large ribosomal subunit protein uL4.